We begin with the raw amino-acid sequence, 306 residues long: Aspartate carbamoyltransferase catalytic subunit (306 aa).

Carbamoyl phosphate is bound by residues Arg56 and Thr57. Lys84 is an L-aspartate binding site. 3 residues coordinate carbamoyl phosphate: Arg106, His136, and Gln139. L-aspartate contacts are provided by Arg169 and Arg221. Carbamoyl phosphate-binding residues include Ala262 and Pro263.

The protein belongs to the aspartate/ornithine carbamoyltransferase superfamily. ATCase family. As to quaternary structure, heterododecamer (2C3:3R2) of six catalytic PyrB chains organized as two trimers (C3), and six regulatory PyrI chains organized as three dimers (R2).

It carries out the reaction carbamoyl phosphate + L-aspartate = N-carbamoyl-L-aspartate + phosphate + H(+). It functions in the pathway pyrimidine metabolism; UMP biosynthesis via de novo pathway; (S)-dihydroorotate from bicarbonate: step 2/3. Its function is as follows. Catalyzes the condensation of carbamoyl phosphate and aspartate to form carbamoyl aspartate and inorganic phosphate, the committed step in the de novo pyrimidine nucleotide biosynthesis pathway. The chain is Aspartate carbamoyltransferase catalytic subunit from Streptococcus gordonii (strain Challis / ATCC 35105 / BCRC 15272 / CH1 / DL1 / V288).